A 364-amino-acid chain; its full sequence is Probable dual-specificity RNA methyltransferase RlmN (364 aa).

E107 acts as the Proton acceptor in catalysis. A Radical SAM core domain is found at H113 to D346. C120 and C351 are joined by a disulfide. [4Fe-4S] cluster contacts are provided by C127, C131, and C134. S-adenosyl-L-methionine contacts are provided by residues G177 to E178, S209, S232 to H234, and N308. Residue C351 is the S-methylcysteine intermediate of the active site.

This sequence belongs to the radical SAM superfamily. RlmN family. The cofactor is [4Fe-4S] cluster.

The protein localises to the cytoplasm. It catalyses the reaction adenosine(2503) in 23S rRNA + 2 reduced [2Fe-2S]-[ferredoxin] + 2 S-adenosyl-L-methionine = 2-methyladenosine(2503) in 23S rRNA + 5'-deoxyadenosine + L-methionine + 2 oxidized [2Fe-2S]-[ferredoxin] + S-adenosyl-L-homocysteine. The catalysed reaction is adenosine(37) in tRNA + 2 reduced [2Fe-2S]-[ferredoxin] + 2 S-adenosyl-L-methionine = 2-methyladenosine(37) in tRNA + 5'-deoxyadenosine + L-methionine + 2 oxidized [2Fe-2S]-[ferredoxin] + S-adenosyl-L-homocysteine. Its function is as follows. Specifically methylates position 2 of adenine 2503 in 23S rRNA and position 2 of adenine 37 in tRNAs. Confers resistance to some classes of antibiotics. The polypeptide is Probable dual-specificity RNA methyltransferase RlmN (Staphylococcus aureus (strain bovine RF122 / ET3-1)).